The chain runs to 418 residues: STE20-related kinase adapter protein beta (418 aa).

A Protein kinase domain is found at 58 to 369 (YELQVEIGRG…ASSLLSHVFF (312 aa)). ATP-binding positions include 64-72 (IGRGFDNLT) and Lys89.

Belongs to the protein kinase superfamily. STE Ser/Thr protein kinase family. STE20 subfamily. Component of a trimeric complex composed of STK11/LKB1, STRAD (STRADA or STRADB) and CAB39/MO25 (CAB39/MO25alpha or CAB39L/MO25beta): the complex tethers STK11/LKB1 in the cytoplasm and stimulates its catalytic activity. Interacts with BIRC4/XIAP. These two proteins are likely to coexist in a complex with TAK1, TRAF6, TAB1 and TAB2. In terms of tissue distribution, highly expressed in heart, skeletal muscle, testis, liver and colon.

It is found in the nucleus. It localises to the cytoplasm. Pseudokinase which, in complex with CAB39/MO25 (CAB39/MO25alpha or CAB39L/MO25beta), binds to and activates STK11/LKB1. Adopts a closed conformation typical of active protein kinases and binds STK11/LKB1 as a pseudosubstrate, promoting conformational change of STK11/LKB1 in an active conformation. The polypeptide is STE20-related kinase adapter protein beta (STRADB) (Homo sapiens (Human)).